A 252-amino-acid chain; its full sequence is Triosephosphate isomerase (252 aa).

9 to 11 provides a ligand contact to substrate; it reads NWK. The active-site Electrophile is the H95. The Proton acceptor role is filled by E167. Substrate contacts are provided by residues G173, S213, and 234 to 235; that span reads GG.

Belongs to the triosephosphate isomerase family. As to quaternary structure, homodimer.

The protein resides in the cytoplasm. It catalyses the reaction D-glyceraldehyde 3-phosphate = dihydroxyacetone phosphate. It participates in carbohydrate biosynthesis; gluconeogenesis. Its pathway is carbohydrate degradation; glycolysis; D-glyceraldehyde 3-phosphate from glycerone phosphate: step 1/1. Involved in the gluconeogenesis. Catalyzes stereospecifically the conversion of dihydroxyacetone phosphate (DHAP) to D-glyceraldehyde-3-phosphate (G3P). This Syntrophotalea carbinolica (strain DSM 2380 / NBRC 103641 / GraBd1) (Pelobacter carbinolicus) protein is Triosephosphate isomerase.